The chain runs to 221 residues: Large ribosomal subunit protein uL4 (221 aa).

The interval 44 to 102 (AARQGTHKVKRRGEVRGGGKKPYRQKGTGRARQGSTRAPQFAGGGVVHGPTPRDYSQRT) is disordered. Basic residues predominate over residues 61–72 (GGKKPYRQKGTG).

It belongs to the universal ribosomal protein uL4 family. As to quaternary structure, part of the 50S ribosomal subunit.

Its function is as follows. One of the primary rRNA binding proteins, this protein initially binds near the 5'-end of the 23S rRNA. It is important during the early stages of 50S assembly. It makes multiple contacts with different domains of the 23S rRNA in the assembled 50S subunit and ribosome. Forms part of the polypeptide exit tunnel. This Streptomyces avermitilis (strain ATCC 31267 / DSM 46492 / JCM 5070 / NBRC 14893 / NCIMB 12804 / NRRL 8165 / MA-4680) protein is Large ribosomal subunit protein uL4.